We begin with the raw amino-acid sequence, 559 residues long: MENVQDFIISILRANPSLRDTRSFLASFGPRPTKLFQEQQSQDIIIPPPPSTPPASTTATPTIPIQPTPSPVITSILNPVYNRTALVKIQGPFTDVQLDSITRGLVYLSKLGLVSVIVVDNDNQPRGDQDERRVIIDEVMRVVSSLEKHGARARPITGAIVRLGPKPGSEDPTSELDFTPPETHTLPPDLTPLRSALRAGEIPVVSPFALDSFCRSVRVDSNDVIAGLSADAPSDFSKEVELAPFRLMIINRHGGIPSYARSGYPHLLINLSSEYQHIHETFREEWRHTHPSALSNLALARTCLAYMPPTSSAIMVSHKSPSSLIGNLITNKPAVSSSLPHALLQGNQRLTPHTPTLLRRGLPVQVFHSVSDIDKIKLNALLEQSFGRKLDSASFYARLEKKLDFVIVAGDYVGAAIVTNEDDPVSGKPISYLDKFAVLPSHQGDGTVDFLWVALHDETYGLGHPFSANPNGGKGGKGEGRDLVWRSRSKNPVNKWYFDRSSGHLRMGSWVLFWCDAEKRLKIEEGRRGSAGLSYVEDWEEGRLRTWAEAVSGIPSSWM.

The interval 162 to 188 (RLGPKPGSEDPTSELDFTPPETHTLPP) is disordered. The region spanning 362 to 538 (LPVQVFHSVS…GSAGLSYVED (177 aa)) is the N-acetyltransferase domain.

It belongs to the acetyltransferase family.

The protein localises to the mitochondrion. It carries out the reaction L-glutamate + acetyl-CoA = N-acetyl-L-glutamate + CoA + H(+). It participates in amino-acid biosynthesis; L-arginine biosynthesis; N(2)-acetyl-L-ornithine from L-glutamate: step 1/4. N-acetylglutamate synthase involved in arginine biosynthesis. The chain is Amino-acid acetyltransferase, mitochondrial (ARG2) from Laccaria bicolor (strain S238N-H82 / ATCC MYA-4686) (Bicoloured deceiver).